Here is a 179-residue protein sequence, read N- to C-terminus: Apolipophorin-3b (179 aa).

Residues 1–16 (MNTLLAVLMLAVAAQA) form the signal peptide. Repeats lie at residues 30 to 40 (VQQLNHTIVNA), 41 to 52 (AHELHETLGLPT), 53 to 60 (PDEALNLL), 61 to 78 (TEQA…TTSL), 79 to 89 (KQEAEKHQGSV), 90 to 99 (AEQLNRFARN), 100 to 113 (LNNS…SAQP), 114 to 127 (ADQL…LTNV), 128 to 140 (GHQW…RPSV), 141 to 151 (AQEAWAPVQSA), 152 to 165 (LQEA…AAAN), and 166 to 179 (LQNS…KPAN). N-linked (GlcNAc...) asparagine glycosylation is present at Asn-34. A glycan (N-linked (GlcNAc...) asparagine) is linked at Asn-101. Positions 152–179 (LQEAAEKTKEAAANLQNSIQSAVQKPAN) are disordered. Residues 165 to 179 (NLQNSIQSAVQKPAN) are compositionally biased toward polar residues.

Belongs to the insect apolipophorin-3 family. As to quaternary structure, equilibrium between a soluble monomer and a bound lipoprotein form. Apolipophorin-3 associates with lipophorin during lipid loading until each particle contains 14 molecules of apolipophorin-3 in L.migratoria (5 molecules of apolipophorin-3a and 9 of apolipophorin-3b). As to expression, hemolymph.

The protein resides in the secreted. Assists in the loading of diacylglycerol, generated from triacylglycerol stores in the fat body through the action of adipokinetic hormone, into lipophorin, the hemolymph lipoprotein. It increases the lipid carrying capacity of lipophorin by covering the expanding hydrophobic surface resulting from diacylglycerol uptake. It thus plays a critical role in the transport of lipids during flight in several species of insects. The chain is Apolipophorin-3b from Locusta migratoria (Migratory locust).